Here is a 21-residue protein sequence, read N- to C-terminus: Cupiennin-6d (21 aa).

Serine amide is present on Ser21.

In terms of tissue distribution, expressed by the venom gland.

The protein resides in the secreted. The sequence is that of Cupiennin-6d from Cupiennius salei (American wandering spider).